We begin with the raw amino-acid sequence, 146 residues long: Antirestriction protein KlcA (146 aa).

The protein belongs to the antirestriction protein family.

Could be involved in overcoming restriction barriers during establishment after conjugative transfer. The protein is Antirestriction protein KlcA (klcA) of Escherichia coli.